The primary structure comprises 530 residues: Chaperone Ric-8A (530 aa).

Serine 435 carries the post-translational modification Phosphoserine. Residues threonine 440 and threonine 442 each carry the phosphothreonine modification. 4 positions are modified to phosphoserine: serine 501, serine 522, serine 523, and serine 527.

Belongs to the synembryn family. Interacts with GDP-bound G alpha proteins GNAI1, GNAO1 and GNAQ, and with GNA13 with lower affinity. Does not interact with G-alpha proteins when they are in complex with subunits beta and gamma. Interacts (via C-terminus) with RGS14; the interaction stimulates the dissociation of the complex between RGS14 and the active GTP-bound form of GNAI1. Interacts with NCS1; interaction is favored in the absence of Ca(2+) and myristoylation of NCS1 is not required. In terms of processing, phosphorylated at Ser-435 and Thr-440 by CK2, stabilizing its interface with G alpha proteins.

The protein localises to the cytoplasm. It is found in the cell cortex. Chaperone that specifically binds and folds nascent G alpha proteins prior to G protein heterotrimer formation, promoting their stability and activity: folds GNAI1, GNAO1, GNA13 and GNAQ. Does not fold G(s) G-alpha proteins GNAS nor GNAL. Also acts as a guanine nucleotide exchange factor (GEF) for G alpha proteins by stimulating exchange of bound GDP for free GTP. Involved in regulation of microtubule pulling forces during mitotic movement of chromosomes by stimulating G(i)-alpha protein (GNAI1), possibly leading to release G(i)-alpha-GTP and NuMA proteins from the NuMA-GPSM2-G(i)-alpha-GDP complex. Also acts as an activator for G(q)-alpha (GNAQ) protein by enhancing the G(q)-coupled receptor-mediated ERK activation. The chain is Chaperone Ric-8A (RIC8A) from Bos taurus (Bovine).